A 140-amino-acid chain; its full sequence is Putative nickel-responsive regulator (140 aa).

Positions 81, 92, 94, and 100 each coordinate Ni(2+).

The protein belongs to the transcriptional regulatory CopG/NikR family. The cofactor is Ni(2+).

Functionally, transcriptional regulator. This chain is Putative nickel-responsive regulator, found in Methanococcoides burtonii (strain DSM 6242 / NBRC 107633 / OCM 468 / ACE-M).